Reading from the N-terminus, the 255-residue chain is Small ribosomal subunit protein uS2 (255 aa).

The protein belongs to the universal ribosomal protein uS2 family.

In Streptococcus uberis (strain ATCC BAA-854 / 0140J), this protein is Small ribosomal subunit protein uS2.